The primary structure comprises 237 residues: MILGDDECNINEHRFLVALYTSRTLFCGGTLINQEWVLTAAHCNMEDIQIKLGMHSKKVPNEDEQKRVPKEKFFCLSSKNYTLWDKDIMLIRLDSPVKNSAHIAPLSLPSSPPSVGSVCRTMGWGRISSTKETYPDVPHCVNINLLEYEMCRAPYPEFELPATSRTLCAGILEGGKDTCVGDSGGPLICNGQFQGIASWGDDPCAQPHKPAAYTKVFDHLDWIENIIAGNTDASCPP.

M1 is a propeptide. In terms of domain architecture, Peptidase S1 spans 2–228 (ILGDDECNIN…HLDWIENIIA (227 aa)). The cysteines at positions 27 and 43 are disulfide-linked. The Charge relay system role is filled by H42. N80 carries an N-linked (GlcNAc...) asparagine glycan. The active-site Charge relay system is D87. 3 disulfides stabilise this stretch: C119-C189, C151-C168, and C179-C204. The Charge relay system role is filled by S183.

It belongs to the peptidase S1 family. Snake venom subfamily. As to expression, expressed by the venom gland (at protein level). Expressed by the venom gland.

The protein localises to the secreted. With respect to regulation, the hydrolysis of TAMe (tosyl-arginine methyl ester) substrate is activated by Ca(2+), Fe(3+), Mg(2+) and Zn(2+), and inhibited by EDTA, PMSF and DTT. Functionally, thrombin-like enzyme that shows fibrinogenolytic activity against bovine fibrinogen alpha and beta chains, but not gamma chain. Hydrolyzes fibrin. Enhances ADP-induced human platelet aggregation. Has arginine esterase activity for TAMe (tosyl-arginine methyl ester) substrate. Reduces thrombin-induced thrombosis. Does not have hemorrhagic activity. Reduces the motility of human liver cancer HepG2 cells in a wound-healing assay. The chain is Thrombin-like enzyme agkihpin-2 from Gloydius halys (Chinese water mocassin).